A 379-amino-acid polypeptide reads, in one-letter code: Cyclic di-GMP phosphodiesterase PdeB (379 aa).

One can recognise an HD-GYP domain in the interval 114–310 (FYKKQKKIFI…PLDFIVELND (197 aa)).

Mn(2+) serves as cofactor.

The enzyme catalyses 3',3'-c-di-GMP + 2 H2O = 2 GMP + 2 H(+). In terms of biological role, phosphodiesterase (PDE) that catalyzes the hydrolysis of cyclic diguanylate (c-di-GMP) to GMP. The protein is Cyclic di-GMP phosphodiesterase PdeB of Borreliella burgdorferi (strain ATCC 35210 / DSM 4680 / CIP 102532 / B31) (Borrelia burgdorferi).